The following is a 44-amino-acid chain: Cytochrome b559 subunit beta (44 aa).

Residues 17 to 41 (VRWLAVHTLAVPSVFFVGAIAAMQF) traverse the membrane as a helical segment. Arg-18 and His-23 together coordinate heme.

This sequence belongs to the PsbE/PsbF family. In terms of assembly, heterodimer of an alpha subunit and a beta subunit. PSII is composed of 1 copy each of membrane proteins PsbA, PsbB, PsbC, PsbD, PsbE, PsbF, PsbH, PsbI, PsbJ, PsbK, PsbL, PsbM, PsbT, PsbX, PsbY, PsbZ, Psb30/Ycf12, peripheral proteins PsbO, CyanoQ (PsbQ), PsbU, PsbV and a large number of cofactors. It forms dimeric complexes. The cofactor is heme b.

Its subcellular location is the cellular thylakoid membrane. Functionally, this b-type cytochrome is tightly associated with the reaction center of photosystem II (PSII). PSII is a light-driven water:plastoquinone oxidoreductase that uses light energy to abstract electrons from H(2)O, generating O(2) and a proton gradient subsequently used for ATP formation. It consists of a core antenna complex that captures photons, and an electron transfer chain that converts photonic excitation into a charge separation. This Synechocystis sp. (strain ATCC 27184 / PCC 6803 / Kazusa) protein is Cytochrome b559 subunit beta.